The sequence spans 181 residues: Ribosome-recycling factor (181 aa).

This sequence belongs to the RRF family.

It is found in the cytoplasm. Its function is as follows. Responsible for the release of ribosomes from messenger RNA at the termination of protein biosynthesis. May increase the efficiency of translation by recycling ribosomes from one round of translation to another. This Tropheryma whipplei (strain TW08/27) (Whipple's bacillus) protein is Ribosome-recycling factor.